Here is a 690-residue protein sequence, read N- to C-terminus: Elongation factor G (690 aa).

The 276-residue stretch at 8-283 folds into the tr-type G domain; it reads EDYRNFGIMA…AVVDYLPSPL (276 aa). GTP-binding positions include 17–24, 81–85, and 135–138; these read AHIDAGKT, DTPGH, and NKMD.

It belongs to the TRAFAC class translation factor GTPase superfamily. Classic translation factor GTPase family. EF-G/EF-2 subfamily.

The protein localises to the cytoplasm. Its function is as follows. Catalyzes the GTP-dependent ribosomal translocation step during translation elongation. During this step, the ribosome changes from the pre-translocational (PRE) to the post-translocational (POST) state as the newly formed A-site-bound peptidyl-tRNA and P-site-bound deacylated tRNA move to the P and E sites, respectively. Catalyzes the coordinated movement of the two tRNA molecules, the mRNA and conformational changes in the ribosome. The chain is Elongation factor G from Rhodopseudomonas palustris (strain ATCC BAA-98 / CGA009).